The following is a 125-amino-acid chain: Fluoride-specific ion channel FluC (125 aa).

A run of 4 helical transmembrane segments spans residues 5-25 (FVFIALAGALGTLARYSLAGF), 33-53 (FFPFGTLVVNITGCFAAGFLW), 69-89 (FVLVGFMGAFTTFSAFILETG), and 101-121 (IVNLLLQNSLGFGALMAGIVL). Glycine 76 and threonine 79 together coordinate Na(+).

It belongs to the fluoride channel Fluc/FEX (TC 1.A.43) family.

The protein localises to the cell inner membrane. The enzyme catalyses fluoride(in) = fluoride(out). Na(+) is not transported, but it plays an essential structural role and its presence is essential for fluoride channel function. Functionally, fluoride-specific ion channel. Important for reducing fluoride concentration in the cell, thus reducing its toxicity. The protein is Fluoride-specific ion channel FluC of Desulforapulum autotrophicum (strain ATCC 43914 / DSM 3382 / VKM B-1955 / HRM2) (Desulfobacterium autotrophicum).